The primary structure comprises 181 residues: Alkyl hydroperoxide reductase AhpD (181 aa).

Cys131 serves as the catalytic Proton donor. Cysteines 131 and 134 form a disulfide. The Cysteine sulfenic acid (-SOH) intermediate role is filled by Cys134.

Belongs to the AhpD family.

It carries out the reaction N(6)-[(R)-dihydrolipoyl]-L-lysyl-[lipoyl-carrier protein] + a hydroperoxide = N(6)-[(R)-lipoyl]-L-lysyl-[lipoyl-carrier protein] + an alcohol + H2O. Its function is as follows. Antioxidant protein with alkyl hydroperoxidase activity. Required for the reduction of the AhpC active site cysteine residues and for the regeneration of the AhpC enzyme activity. This is Alkyl hydroperoxide reductase AhpD from Rhodopseudomonas palustris (strain BisA53).